A 445-amino-acid chain; its full sequence is Alkylglycerol monooxygenase (445 aa).

2 helical membrane-spanning segments follow: residues 43-63 (ATPFFISLMLLELVVSWILKG) and 111-131 (WDSPWTWYSAFLGVDFGYYWF). A Fatty acid hydroxylase domain is found at 120 to 249 (AFLGVDFGYY…LIIWDKIFGT (130 aa)). Residues 132–136 (HRMAH) carry the Histidine box-1 motif. A Histidine box-2 motif is present at residues 145–149 (HQTHH). A Histidine box-3 motif is present at residues 221–225 (HRVHH). The next 3 membrane-spanning stretches (helical) occupy residues 334 to 354 (LLKIYTVVQFALMLAFYEETF), 363 to 383 (VTLLLRVCFIILTLTSIGFLL), and 413 to 433 (VPSLSSAFEIVFSICIAFWGV).

Belongs to the sterol desaturase family. TMEM195 subfamily. The cofactor is Fe cation.

The protein localises to the endoplasmic reticulum membrane. It carries out the reaction 1-O-(1,2-saturated-alkyl)-sn-glycerol + (6R)-L-erythro-5,6,7,8-tetrahydrobiopterin + O2 = a 1-(1-hydroxyalkyl)-sn-glycerol + (6R)-L-erythro-6,7-dihydrobiopterin + H2O. Functionally, glyceryl-ether monooxygenase that cleaves the O-alkyl bond of ether lipids. Ether lipids are essential components of brain membranes. The chain is Alkylglycerol monooxygenase (AGMO) from Homo sapiens (Human).